Consider the following 226-residue polypeptide: Thymidylate kinase (226 aa).

9–16 contributes to the ATP binding site; it reads GPEGSGKS.

This sequence belongs to the thymidylate kinase family.

It catalyses the reaction dTMP + ATP = dTDP + ADP. Functionally, phosphorylation of dTMP to form dTDP in both de novo and salvage pathways of dTTP synthesis. The chain is Thymidylate kinase from Roseiflexus sp. (strain RS-1).